The primary structure comprises 149 residues: D-aminoacyl-tRNA deacylase (149 aa).

A Gly-cisPro motif, important for rejection of L-amino acids motif is present at residues Gly137–Pro138.

The protein belongs to the DTD family. In terms of assembly, homodimer.

The protein localises to the cytoplasm. The enzyme catalyses glycyl-tRNA(Ala) + H2O = tRNA(Ala) + glycine + H(+). The catalysed reaction is a D-aminoacyl-tRNA + H2O = a tRNA + a D-alpha-amino acid + H(+). In terms of biological role, an aminoacyl-tRNA editing enzyme that deacylates mischarged D-aminoacyl-tRNAs. Also deacylates mischarged glycyl-tRNA(Ala), protecting cells against glycine mischarging by AlaRS. Acts via tRNA-based rather than protein-based catalysis; rejects L-amino acids rather than detecting D-amino acids in the active site. By recycling D-aminoacyl-tRNA to D-amino acids and free tRNA molecules, this enzyme counteracts the toxicity associated with the formation of D-aminoacyl-tRNA entities in vivo and helps enforce protein L-homochirality. The protein is D-aminoacyl-tRNA deacylase of Clostridium botulinum (strain Loch Maree / Type A3).